The sequence spans 193 residues: MSPMSGLRQQLKMLGTALLGKRATKSVKKKPFTEVEIKDLRTAFDLLDRNRDGRVTANELQFMLKNLGINVSDELIHDLIREASHSGNGLINEAEFLQWVGRIQALRDEQHSHEDSKDSKPVDEADDVTEDLIAAFRVFDRDGNGFITRDELQTAMEMIGEPLNEQQLEQLLVIADLDQDGRINYEEFTRLLL.

EF-hand domains lie at Val35–Asn70, Val71–Leu106, Asp127–Pro162, and Leu163–Leu193. The Ca(2+) site is built by Asp48, Asn50, Asp52, Arg54, and Glu59. Residues Asp140, Asp142, Asn144, Glu151, Asp176, Asp178, Asp180, Arg182, and Glu187 each coordinate Ca(2+).

The sequence is that of Calcium-binding protein E63-1 (Eip63F-1) from Drosophila melanogaster (Fruit fly).